The chain runs to 158 residues: Transcription elongation factor GreA (158 aa).

It belongs to the GreA/GreB family.

In terms of biological role, necessary for efficient RNA polymerase transcription elongation past template-encoded arresting sites. The arresting sites in DNA have the property of trapping a certain fraction of elongating RNA polymerases that pass through, resulting in locked ternary complexes. Cleavage of the nascent transcript by cleavage factors such as GreA or GreB allows the resumption of elongation from the new 3'terminus. GreA releases sequences of 2 to 3 nucleotides. The sequence is that of Transcription elongation factor GreA from Verminephrobacter eiseniae (strain EF01-2).